A 749-amino-acid polypeptide reads, in one-letter code: Activating signal cointegrator 1 complex subunit 2 (749 aa).

The interval 1–26 (MPALPLDQLQITHKDPKTGQPKTSAA) is disordered. Residue threonine 233 is modified to Phosphothreonine. The region spanning 465 to 508 (ELDSLISQVKDLLPDLGEGFILACLEHYSYDSEQVINNILEDRL) is the CUE domain. 2 disordered regions span residues 606–675 (EDEY…QDPA) and 689–749 (LARK…MIPS). At serine 625 the chain carries Phosphoserine. Acidic residues predominate over residues 649–662 (VQEEEWDEEDEVEE). Basic and acidic residues-rich tracts occupy residues 663–675 (EAPK…QDPA) and 711–726 (QSRE…EANK).

Belongs to the ASCC2 family. As to quaternary structure, identified in the ASCC complex that contains ASCC1, ASCC2 and ASCC3. Interacts directly with ASCC3. The ASCC complex interacts with ALKBH3. Interacts (via CUE domain) with 'Lys-63'-linked polyubiquitin chains, but not with 'Lys-48'-linked polyubiquitin chains. Part of the ASC-1 complex, that contains TRIP4, ASCC1, ASCC2 and ASCC3. Component of the RQT (ribosome quality control trigger) complex, that contains ASCC2, ASCC3 and TRIP4. Interacts with CSRP1. Interacts with PRPF8, a component of the spliceosome. Interacts with ZCCHC4.

The protein resides in the nucleus. The protein localises to the nucleus speckle. Functionally, ubiquitin-binding protein involved in DNA repair and rescue of stalled ribosomes. Plays a role in DNA damage repair as component of the ASCC complex. Recruits ASCC3 and ALKBH3 to sites of DNA damage by binding to polyubiquitinated proteins that have 'Lys-63'-linked polyubiquitin chains. Part of the ASC-1 complex that enhances NF-kappa-B, SRF and AP1 transactivation. Involved in activation of the ribosome quality control (RQC) pathway, a pathway that degrades nascent peptide chains during problematic translation. Specifically recognizes and binds RPS20/uS10 ubiquitinated by ZNF598, promoting recruitment of the RQT (ribosome quality control trigger) complex on stalled ribosomes, followed by disassembly of stalled ribosomes. The chain is Activating signal cointegrator 1 complex subunit 2 (Ascc2) from Mus musculus (Mouse).